The chain runs to 225 residues: Ribose-5-phosphate isomerase A (225 aa).

Substrate is bound by residues 27–30 (SGST), 82–85 (DGAD), and 95–98 (KGGG). Residue Glu104 is the Proton acceptor of the active site. A substrate-binding site is contributed by Lys122.

It belongs to the ribose 5-phosphate isomerase family. In terms of assembly, homodimer.

The catalysed reaction is aldehydo-D-ribose 5-phosphate = D-ribulose 5-phosphate. Its pathway is carbohydrate degradation; pentose phosphate pathway; D-ribose 5-phosphate from D-ribulose 5-phosphate (non-oxidative stage): step 1/1. In terms of biological role, catalyzes the reversible conversion of ribose-5-phosphate to ribulose 5-phosphate. The protein is Ribose-5-phosphate isomerase A of Archaeoglobus fulgidus (strain ATCC 49558 / DSM 4304 / JCM 9628 / NBRC 100126 / VC-16).